Here is a 75-residue protein sequence, read N- to C-terminus: Sec-independent protein translocase protein TatA (75 aa).

Residues 1–21 traverse the membrane as a helical segment; the sequence is MGSFSIWHWLIVLVIVALVFG. Residues 44-75 form a disordered region; sequence KDANSDKPAEQVTQQKVADDTIDVQAKEKTNS.

It belongs to the TatA/E family. The Tat system comprises two distinct complexes: a TatABC complex, containing multiple copies of TatA, TatB and TatC subunits, and a separate TatA complex, containing only TatA subunits. Substrates initially bind to the TatABC complex, which probably triggers association of the separate TatA complex to form the active translocon.

The protein localises to the cell inner membrane. Part of the twin-arginine translocation (Tat) system that transports large folded proteins containing a characteristic twin-arginine motif in their signal peptide across membranes. TatA could form the protein-conducting channel of the Tat system. The sequence is that of Sec-independent protein translocase protein TatA from Bordetella petrii (strain ATCC BAA-461 / DSM 12804 / CCUG 43448).